We begin with the raw amino-acid sequence, 486 residues long: Glutamyl-tRNA(Gln) amidotransferase subunit A (486 aa).

Active-site charge relay system residues include lysine 77 and serine 152. Serine 176 serves as the catalytic Acyl-ester intermediate.

The protein belongs to the amidase family. GatA subfamily. Heterotrimer of A, B and C subunits.

The catalysed reaction is L-glutamyl-tRNA(Gln) + L-glutamine + ATP + H2O = L-glutaminyl-tRNA(Gln) + L-glutamate + ADP + phosphate + H(+). Allows the formation of correctly charged Gln-tRNA(Gln) through the transamidation of misacylated Glu-tRNA(Gln) in organisms which lack glutaminyl-tRNA synthetase. The reaction takes place in the presence of glutamine and ATP through an activated gamma-phospho-Glu-tRNA(Gln). The chain is Glutamyl-tRNA(Gln) amidotransferase subunit A from Pediococcus pentosaceus (strain ATCC 25745 / CCUG 21536 / LMG 10740 / 183-1w).